Here is a 97-residue protein sequence, read N- to C-terminus: Gibberellin-regulated protein 5 (97 aa).

The N-terminal stretch at 1 to 27 is a signal peptide; it reads MANCIRRNALFFLTLLFLLSVSNLVQA.

The protein belongs to the GASA family. Six disulfide bonds may be present. In terms of tissue distribution, expressed in roots, root hairs, vasculature of cotyledons and hypocotyls, shoot apex, leaf veins, stems, flower receptacles, pollen, filaments, anthers and siliques.

It is found in the secreted. The protein localises to the cell wall. It localises to the extracellular space. Its subcellular location is the extracellular matrix. Its function is as follows. Gibberellin-regulated protein that acts as a negative regulator of gibberellin-induced flowering and stem growth. May inhibit flowering and inflorescence growth via a pathway involving GAI and by enhancing FLC expression and repressing FT and LFY. Acts as a negative regulator in thermotolerance by resogulating both salicylic acid (SA) signaling and heat shock-protein accumulation. The polypeptide is Gibberellin-regulated protein 5 (GASA5) (Arabidopsis thaliana (Mouse-ear cress)).